A 95-amino-acid chain; its full sequence is Putative membrane protein insertion efficiency factor (95 aa).

The protein belongs to the UPF0161 family.

Its subcellular location is the cell membrane. Its function is as follows. Could be involved in insertion of integral membrane proteins into the membrane. The polypeptide is Putative membrane protein insertion efficiency factor (Lactobacillus delbrueckii subsp. bulgaricus (strain ATCC 11842 / DSM 20081 / BCRC 10696 / JCM 1002 / NBRC 13953 / NCIMB 11778 / NCTC 12712 / WDCM 00102 / Lb 14)).